A 235-amino-acid polypeptide reads, in one-letter code: tRNA (guanine-N(1)-)-methyltransferase (235 aa).

Residues G114 and 134-139 (VGDYIL) contribute to the S-adenosyl-L-methionine site.

Belongs to the RNA methyltransferase TrmD family. In terms of assembly, homodimer.

The protein localises to the cytoplasm. It catalyses the reaction guanosine(37) in tRNA + S-adenosyl-L-methionine = N(1)-methylguanosine(37) in tRNA + S-adenosyl-L-homocysteine + H(+). Specifically methylates guanosine-37 in various tRNAs. This is tRNA (guanine-N(1)-)-methyltransferase from Chelativorans sp. (strain BNC1).